The following is a 2453-amino-acid chain: Tyrosine-protein phosphatase non-receptor type 13 (2453 aa).

The KIND domain maps to 3–190; the sequence is VSLAEALEVR…SGTDPLSRSS (188 aa). The tract at residues 183–227 is disordered; sequence TDPLSRSSEQKPDRSQAIRDRLRGKGLPTGRSSTSDALDTHEAPL. Basic and acidic residues predominate over residues 190-205; the sequence is SEQKPDRSQAIRDRLR. S240 is subject to Phosphoserine. The segment at 253–285 is disordered; sequence EDYLKDTPSDNNSRHEDSETFSSPYQFKTSTPQ. Positions 256–270 are enriched in basic and acidic residues; that stretch reads LKDTPSDNNSRHEDS. The span at 272-285 shows a compositional bias: polar residues; sequence TFSSPYQFKTSTPQ. S297 and S298 each carry phosphoserine. The interval 429–457 is disordered; sequence SEASKRFESSSGLPGVDETGQTRPSRQYE. Residues 447 to 457 are compositionally biased toward polar residues; sequence TGQTRPSRQYE. Positions 458–493 form a coiled coil; sequence TSLEGNLINQDIMLRRQEEEMMQLQARMALRQSRLS. In terms of domain architecture, FERM spans 565–865; it reads RKVNIRLLSG…SQHKFQLQMR (301 aa). Phosphoserine occurs at positions 883, 890, 901, 904, and 907. The segment covering 944–957 has biased composition (basic and acidic residues); sequence KEKTDKASWEEKPR. Disordered regions lie at residues 944–966 and 1007–1063; these read KEKTDKASWEEKPRGMSKSYHDL and LAGL…VPFK. Residues S1021 and S1025 each carry the phosphoserine modification. Over residues 1025 to 1034 the composition is skewed to basic and acidic residues; sequence SPERRNHESD. Low complexity predominate over residues 1049–1058; sequence SLPSSGKSSS. S1076 carries the post-translational modification Phosphoserine. The 87-residue stretch at 1084–1170 folds into the PDZ 1 domain; that stretch reads LVNLKKDPKH…DVTLVISQPK (87 aa). Disordered regions lie at residues 1199–1356 and 1441–1478; these read DSAM…GDTF and GQVPTSRERDPAGPQSPPPDQDAQRQAPEKVAKQTPHV. The residue at position 1221 (S1221) is a Phosphoserine. Polar residues-rich tracts occupy residues 1242–1252 and 1267–1279; these read ESASLSQSQVN and PQHSSPSPSVTTK. Position 1270 is a phosphoserine (S1270). Residues 1297–1315 are compositionally biased toward basic and acidic residues; that stretch reads GISDLIEHLDCADSDKDDS. Residues 1331 to 1341 show a composition bias toward low complexity; sequence SSSLSTSNKTS. Residues 1357 to 1442 enclose the PDZ 2 domain; that stretch reads EVELAKTDGS…VVHLLLEKGQ (86 aa). The segment covering 1467 to 1478 has biased composition (basic and acidic residues); that stretch reads APEKVAKQTPHV. Residues 1491–1579 form the PDZ 3 domain; sequence EVKLFKNSSG…EVSLLLCRPA (89 aa). Residues 1602-1629 show a composition bias toward polar residues; that stretch reads LNSSKETSQPSSSVEQGASSDDNGVSGK. Disordered regions lie at residues 1602-1662 and 1695-1726; these read LNSS…AKMP and KLESESSHPPPLDVSPGQTCQPPAECAPSDAT. Over residues 1638-1655 the composition is skewed to basic and acidic residues; the sequence is SRRESYSDHSESGEDDSV. 2 PDZ domains span residues 1764-1845 and 1857-1942; these read LITL…GRIL and LPDI…TRDG. 2 disordered regions span residues 1991–2024 and 2051–2139; these read EAVCPAGEGSSSQMKESAGLTETKESNSRDDDIY and RHAT…DPPF. The span at 2012-2021 shows a compositional bias: basic and acidic residues; that stretch reads ETKESNSRDD. In terms of domain architecture, Tyrosine-protein phosphatase spans 2180–2434; that stretch reads PSKELENLQE…VFCYQVILYV (255 aa). Residues D2345, 2375–2381, and Q2419 each bind substrate; that span reads CSAGIGR. The active-site Phosphocysteine intermediate is the C2375.

It belongs to the protein-tyrosine phosphatase family. Non-receptor class subfamily. In terms of assembly, interacts (via the first PDZ domain) with PLEKHA1 and PLEKHA2. Interacts (via the second PDZ domain) with TNFRSF6 (Fas receptor) (via C-terminus). Interacts (via the second PDZ domain) with TRIP6 (via the third LIM domain and C-terminus). Interacts (via the third PDZ domain) with NGFR (via C-terminal SVP motif) and PKN2 (via C-terminus). Interacts (via the second or fourth PDZ domains) with PDLIM4 (via C-terminus only or via combined C-terminus and LIM domain, but not LIM domain only). Found in a complex with PDLIM4 and TRIP6. Interacts with PDLIM4; this interaction results in dephosphorylation of SRC 'Tyr-419' by this protein leading to its inactivation. Interacts with BRD7. Interacts with RAPGEF6. Interacts with ARHGAP29. Interacts with PIK3R2; dephosphorylates PIK3R2. Interacts with FBXL2. Interacts (via the FERM domain) with ENTR1. Found in a complex with ENTR1, PTPN13 and GIT1. Expressed predominantly in kidney and, to a lesser extent, in lung, heart, brain and testis.

It localises to the cytoplasm. The protein resides in the cytoskeleton. The protein localises to the nucleus. It is found in the cell projection. Its subcellular location is the lamellipodium. It carries out the reaction O-phospho-L-tyrosyl-[protein] + H2O = L-tyrosyl-[protein] + phosphate. Functionally, tyrosine phosphatase which negatively regulates FAS-induced apoptosis and NGFR-mediated pro-apoptotic signaling. May regulate phosphoinositide 3-kinase (PI3K) signaling through dephosphorylation of PIK3R2. In Mus musculus (Mouse), this protein is Tyrosine-protein phosphatase non-receptor type 13 (Ptpn13).